The chain runs to 226 residues: Protein-L-isoaspartate O-methyltransferase (226 aa).

Residue Ser75 is part of the active site.

The protein belongs to the methyltransferase superfamily. L-isoaspartyl/D-aspartyl protein methyltransferase family.

The protein resides in the cytoplasm. It carries out the reaction [protein]-L-isoaspartate + S-adenosyl-L-methionine = [protein]-L-isoaspartate alpha-methyl ester + S-adenosyl-L-homocysteine. Its function is as follows. Catalyzes the methyl esterification of L-isoaspartyl residues in peptides and proteins that result from spontaneous decomposition of normal L-aspartyl and L-asparaginyl residues. It plays a role in the repair and/or degradation of damaged proteins. This is Protein-L-isoaspartate O-methyltransferase from Lawsonia intracellularis (strain PHE/MN1-00).